The chain runs to 937 residues: Alanine--tRNA ligase (937 aa).

Zn(2+)-binding residues include histidine 626, histidine 630, cysteine 727, and histidine 731.

Belongs to the class-II aminoacyl-tRNA synthetase family. Zn(2+) serves as cofactor.

It localises to the cytoplasm. It carries out the reaction tRNA(Ala) + L-alanine + ATP = L-alanyl-tRNA(Ala) + AMP + diphosphate. In terms of biological role, catalyzes the attachment of alanine to tRNA(Ala) in a two-step reaction: alanine is first activated by ATP to form Ala-AMP and then transferred to the acceptor end of tRNA(Ala). Also edits incorrectly charged Ser-tRNA(Ala) and Gly-tRNA(Ala) via its editing domain. The polypeptide is Alanine--tRNA ligase (Opitutus terrae (strain DSM 11246 / JCM 15787 / PB90-1)).